The sequence spans 152 residues: MSQLCPCGSAVEYSLCCHPYVSGEKVAPDPEHLMRSRYCAFVMQDADYLIKTWHPSCGAAALRAELMTGFAHTEWLGLTVFEHCWQDADNIGFVSFVARFTEGGKTGAIIERSRFLKENGQWYYIDGTRPQFGRNDPCPCGSGKKFKKCCGQ.

This sequence belongs to the UPF0225 family.

The sequence is that of UPF0225 protein YchJ from Shigella flexneri serotype 5b (strain 8401).